Reading from the N-terminus, the 70-residue chain is DNA-directed RNA polymerase subunit omega (70 aa).

It belongs to the RNA polymerase subunit omega family. The RNAP catalytic core consists of 2 alpha, 1 beta, 1 beta' and 1 omega subunit. When a sigma factor is associated with the core the holoenzyme is formed, which can initiate transcription.

It carries out the reaction RNA(n) + a ribonucleoside 5'-triphosphate = RNA(n+1) + diphosphate. Its function is as follows. Promotes RNA polymerase assembly. Latches the N- and C-terminal regions of the beta' subunit thereby facilitating its interaction with the beta and alpha subunits. This chain is DNA-directed RNA polymerase subunit omega, found in Methylobacillus flagellatus (strain ATCC 51484 / DSM 6875 / VKM B-1610 / KT).